The following is a 404-amino-acid chain: MEQQKKTAGKKAGSWSLLMGAAFLMATSAIGPGFLTQTATFTNTLAASFGFVILISIILDIFAQTNVWRIIAVSGKRGQEIANMVLPGLGYFIAILVVLGGLAFNIGNIGGAGLGLQVLFGITPETGALISAVIAILIFVIKEAGKAMDRFTQIAGFVMIILTVYVAATTAPPVGQAVANTFVPEHISIFAIVTLVGGTVGGYITFAGGHRLLDAGIKGKESIPQVTKSSVVGILITSVMRIALFLAVLGVVSKGLHIDESNPAASVFKLAAGNVGYKIFGLIMWSAAITSVIGAAYTSVSFFKTFSPKIEKNSRGIIIGFIVVSTLAFVTIGQPAKILVLVGSLNGLILPIALGTLLVAAYKKNIVGDYKHPLWLTSTGALVVIVMAVMGIYTLCTQLPQLWS.

A run of 11 helical transmembrane segments spans residues 15–35 (WSLL…PGFL), 43–63 (NTLA…DIFA), 84–104 (MVLP…GLAF), 121–141 (GITP…IFVI), 154–174 (IAGF…APPV), 187–207 (ISIF…ITFA), 231–251 (VVGI…VLGV), 279–299 (IFGL…AYTS), 316–336 (GIII…GQPA), 338–358 (ILVL…GTLL), and 373–393 (PLWL…MGIY).

This sequence belongs to the NRAMP family.

It localises to the cell membrane. This is an uncharacterized protein from Bacillus subtilis (strain 168).